The sequence spans 132 residues: Sec-independent protein translocase protein TatB (132 aa).

Residues 2–22 (FDGIGFMELLLIGILGLVVLG) form a helical membrane-spanning segment. The interval 68–132 (ENQGLKDLSP…VSANPDKSNR (65 aa)) is disordered. Positions 102–122 (TPSASSSAPSESTPSEAPTAE) are enriched in low complexity.

It belongs to the TatB family. In terms of assembly, the Tat system comprises two distinct complexes: a TatABC complex, containing multiple copies of TatA, TatB and TatC subunits, and a separate TatA complex, containing only TatA subunits. Substrates initially bind to the TatABC complex, which probably triggers association of the separate TatA complex to form the active translocon.

It localises to the cell inner membrane. Its function is as follows. Part of the twin-arginine translocation (Tat) system that transports large folded proteins containing a characteristic twin-arginine motif in their signal peptide across membranes. Together with TatC, TatB is part of a receptor directly interacting with Tat signal peptides. TatB may form an oligomeric binding site that transiently accommodates folded Tat precursor proteins before their translocation. This Shewanella woodyi (strain ATCC 51908 / MS32) protein is Sec-independent protein translocase protein TatB.